The following is a 139-amino-acid chain: Nucleoside diphosphate kinase (139 aa).

ATP-binding residues include K10, F58, R86, T92, R104, and N114. Catalysis depends on H117, which acts as the Pros-phosphohistidine intermediate.

Belongs to the NDK family. Homotetramer. Requires Mg(2+) as cofactor.

Its subcellular location is the cytoplasm. The enzyme catalyses a 2'-deoxyribonucleoside 5'-diphosphate + ATP = a 2'-deoxyribonucleoside 5'-triphosphate + ADP. It carries out the reaction a ribonucleoside 5'-diphosphate + ATP = a ribonucleoside 5'-triphosphate + ADP. In terms of biological role, major role in the synthesis of nucleoside triphosphates other than ATP. The ATP gamma phosphate is transferred to the NDP beta phosphate via a ping-pong mechanism, using a phosphorylated active-site intermediate. The sequence is that of Nucleoside diphosphate kinase from Mycolicibacterium smegmatis (strain ATCC 700084 / mc(2)155) (Mycobacterium smegmatis).